A 695-amino-acid chain; its full sequence is Elongation factor G (695 aa).

In terms of domain architecture, tr-type G spans 5 to 280 (SHYRNIGIFA…AVIDFLPSPT (276 aa)). GTP contacts are provided by residues 14-21 (AHVDAGKT), 78-82 (DTPGH), and 132-135 (NKLD). The disordered stretch occupies residues 279 to 299 (PTEVDPQPLTDEETGEPTGEV).

Belongs to the TRAFAC class translation factor GTPase superfamily. Classic translation factor GTPase family. EF-G/EF-2 subfamily.

The protein resides in the cytoplasm. Catalyzes the GTP-dependent ribosomal translocation step during translation elongation. During this step, the ribosome changes from the pre-translocational (PRE) to the post-translocational (POST) state as the newly formed A-site-bound peptidyl-tRNA and P-site-bound deacylated tRNA move to the P and E sites, respectively. Catalyzes the coordinated movement of the two tRNA molecules, the mRNA and conformational changes in the ribosome. The protein is Elongation factor G of Alteromonas mediterranea (strain DSM 17117 / CIP 110805 / LMG 28347 / Deep ecotype).